Here is a 144-residue protein sequence, read N- to C-terminus: Peptide methionine sulfoxide reductase MsrB (144 aa).

The span at 1–12 (MDKQQGELRQRL) shows a compositional bias: basic and acidic residues. The disordered stretch occupies residues 1-25 (MDKQQGELRQRLTPEQYAVTQEAAT). Residues 5–128 (QGELRQRLTP…NSAALKFIPV (124 aa)) form the MsrB domain. The active-site Nucleophile is the C117.

The protein belongs to the MsrB Met sulfoxide reductase family.

It carries out the reaction L-methionyl-[protein] + [thioredoxin]-disulfide + H2O = L-methionyl-(R)-S-oxide-[protein] + [thioredoxin]-dithiol. The polypeptide is Peptide methionine sulfoxide reductase MsrB (Lactiplantibacillus plantarum (strain ATCC BAA-793 / NCIMB 8826 / WCFS1) (Lactobacillus plantarum)).